The sequence spans 283 residues: Ribosomal RNA small subunit methyltransferase A (283 aa).

6 residues coordinate S-adenosyl-L-methionine: Asn29, Leu31, Gly56, Glu77, Asp102, and Asn123.

This sequence belongs to the class I-like SAM-binding methyltransferase superfamily. rRNA adenine N(6)-methyltransferase family. RsmA subfamily.

It localises to the cytoplasm. It catalyses the reaction adenosine(1518)/adenosine(1519) in 16S rRNA + 4 S-adenosyl-L-methionine = N(6)-dimethyladenosine(1518)/N(6)-dimethyladenosine(1519) in 16S rRNA + 4 S-adenosyl-L-homocysteine + 4 H(+). Specifically dimethylates two adjacent adenosines (A1518 and A1519) in the loop of a conserved hairpin near the 3'-end of 16S rRNA in the 30S particle. May play a critical role in biogenesis of 30S subunits. The sequence is that of Ribosomal RNA small subunit methyltransferase A from Acidobacterium capsulatum (strain ATCC 51196 / DSM 11244 / BCRC 80197 / JCM 7670 / NBRC 15755 / NCIMB 13165 / 161).